Reading from the N-terminus, the 64-residue chain is Large ribosomal subunit protein bL35 (64 aa).

2 stretches are compositionally biased toward basic residues: residues M1–K15 and A27–R42. The interval M1–T45 is disordered.

This sequence belongs to the bacterial ribosomal protein bL35 family.

This is Large ribosomal subunit protein bL35 from Streptomyces griseus subsp. griseus (strain JCM 4626 / CBS 651.72 / NBRC 13350 / KCC S-0626 / ISP 5235).